A 92-amino-acid polypeptide reads, in one-letter code: MAQLTPKAIEERLSSLPAWKLQAPEIERVVEFSDFVAAMAFVNKVAEKAELAGHHPDIDIRYNRVRLALVTHDAGGLTERDFDLAASIEALL.

Belongs to the pterin-4-alpha-carbinolamine dehydratase family.

It carries out the reaction (4aS,6R)-4a-hydroxy-L-erythro-5,6,7,8-tetrahydrobiopterin = (6R)-L-erythro-6,7-dihydrobiopterin + H2O. This Acidobacterium capsulatum (strain ATCC 51196 / DSM 11244 / BCRC 80197 / JCM 7670 / NBRC 15755 / NCIMB 13165 / 161) protein is Putative pterin-4-alpha-carbinolamine dehydratase.